A 156-amino-acid polypeptide reads, in one-letter code: Rhombotin-1 (156 aa).

LIM zinc-binding domains follow at residues 22–84 (KGCA…LFGT) and 86–148 (GNCA…GQLN).

In terms of tissue distribution, expressed in the brain and not in the thymus.

It localises to the nucleus. Its function is as follows. May be involved in gene regulation within neural lineage cells potentially by direct DNA binding or by binding to other transcription factors. In Bos taurus (Bovine), this protein is Rhombotin-1 (LMO1).